The chain runs to 293 residues: ATP synthase gamma chain (293 aa).

It belongs to the ATPase gamma chain family. F-type ATPases have 2 components, CF(1) - the catalytic core - and CF(0) - the membrane proton channel. CF(1) has five subunits: alpha(3), beta(3), gamma(1), delta(1), epsilon(1). CF(0) has three main subunits: a, b and c.

It localises to the cell inner membrane. Functionally, produces ATP from ADP in the presence of a proton gradient across the membrane. The gamma chain is believed to be important in regulating ATPase activity and the flow of protons through the CF(0) complex. The polypeptide is ATP synthase gamma chain (Psychrobacter arcticus (strain DSM 17307 / VKM B-2377 / 273-4)).